The chain runs to 445 residues: Canavalin (445 aa).

A signal peptide spans 1–26; that stretch reads MAFSARFPLWLLLGVVLLASVSASFA. Cupin type-1 domains follow at residues 49 to 207 and 249 to 407; these read YLFR…DEIE and FNLR…EEVE.

Belongs to the 7S seed storage protein family. In terms of assembly, homotrimer.

Seed storage protein. In Canavalia gladiata (Sword bean), this protein is Canavalin.